Consider the following 259-residue polypeptide: 4-hydroxy-tetrahydrodipicolinate reductase (259 aa).

NAD(+)-binding positions include 9–14 (GAGGRM) and Glu35. Arg36 contributes to the NADP(+) binding site. NAD(+)-binding positions include 92-94 (GTT) and 116-119 (APNM). His149 (proton donor/acceptor) is an active-site residue. His150 contacts (S)-2,3,4,5-tetrahydrodipicolinate. Lys153 functions as the Proton donor in the catalytic mechanism. (S)-2,3,4,5-tetrahydrodipicolinate is bound at residue 159–160 (GT).

It belongs to the DapB family.

It localises to the cytoplasm. It catalyses the reaction (S)-2,3,4,5-tetrahydrodipicolinate + NAD(+) + H2O = (2S,4S)-4-hydroxy-2,3,4,5-tetrahydrodipicolinate + NADH + H(+). The enzyme catalyses (S)-2,3,4,5-tetrahydrodipicolinate + NADP(+) + H2O = (2S,4S)-4-hydroxy-2,3,4,5-tetrahydrodipicolinate + NADPH + H(+). It functions in the pathway amino-acid biosynthesis; L-lysine biosynthesis via DAP pathway; (S)-tetrahydrodipicolinate from L-aspartate: step 4/4. In terms of biological role, catalyzes the conversion of 4-hydroxy-tetrahydrodipicolinate (HTPA) to tetrahydrodipicolinate. The chain is 4-hydroxy-tetrahydrodipicolinate reductase from Nitratidesulfovibrio vulgaris (strain DP4) (Desulfovibrio vulgaris).